The chain runs to 1075 residues: Putative type I restriction enzyme MjaVIIP endonuclease subunit (1075 aa).

This sequence belongs to the HsdR family. The type I restriction/modification system is composed of three polypeptides R, M and S.

It catalyses the reaction Endonucleolytic cleavage of DNA to give random double-stranded fragments with terminal 5'-phosphates, ATP is simultaneously hydrolyzed.. Functionally, the restriction (R) subunit of a type I restriction enzyme that recognizes 5'-CAAN(7)TGG-3' and cleaves a random distance away. The R subunit is required for both endonuclease and ATPase activities but not for modification. After locating a non-methylated recognition site, the enzyme complex serves as a molecular motor that translocates DNA in an ATP-dependent manner until a collision occurs that triggers cleavage. This is Putative type I restriction enzyme MjaVIIP endonuclease subunit from Methanocaldococcus jannaschii (strain ATCC 43067 / DSM 2661 / JAL-1 / JCM 10045 / NBRC 100440) (Methanococcus jannaschii).